A 281-amino-acid polypeptide reads, in one-letter code: Pantothenate synthetase (281 aa).

30-37 (MGYYHAGH) lines the ATP pocket. Residue His-37 is the Proton donor of the active site. Position 61 (Gln-61) interacts with (R)-pantoate. Gln-61 serves as a coordination point for beta-alanine. An ATP-binding site is contributed by 147–150 (GEKD). Position 153 (Gln-153) interacts with (R)-pantoate. ATP-binding positions include Val-176 and 184–187 (MSSR).

Belongs to the pantothenate synthetase family. As to quaternary structure, homodimer.

The protein localises to the cytoplasm. The catalysed reaction is (R)-pantoate + beta-alanine + ATP = (R)-pantothenate + AMP + diphosphate + H(+). The protein operates within cofactor biosynthesis; (R)-pantothenate biosynthesis; (R)-pantothenate from (R)-pantoate and beta-alanine: step 1/1. Catalyzes the condensation of pantoate with beta-alanine in an ATP-dependent reaction via a pantoyl-adenylate intermediate. This is Pantothenate synthetase from Oleidesulfovibrio alaskensis (strain ATCC BAA-1058 / DSM 17464 / G20) (Desulfovibrio alaskensis).